Here is a 1386-residue protein sequence, read N- to C-terminus: Roundabout homolog 3 (1386 aa).

Positions 1–20 (MLRYLLKTLLQMNLFADSLA) are cleaved as a signal peptide. Over 21–891 (GDISNSSELL…VRLARVLREP (871 aa)) the chain is Extracellular. 4 N-linked (GlcNAc...) asparagine glycosylation sites follow: Asn-25, Asn-34, Asn-41, and Asn-53. Ig-like C2-type domains are found at residues 64–160 (PRIV…ASLE), 166–253 (DDFR…AEVM), 258–342 (PSFL…GSLS), 347–440 (PQLV…ALLE), and 450–531 (PPVI…GEAT). Cys-85 and Cys-143 form a disulfide bridge. Asn-156 carries an N-linked (GlcNAc...) asparagine glycan. Intrachain disulfides connect Cys-187–Cys-236, Cys-279–Cys-326, and Cys-368–Cys-424. 3 N-linked (GlcNAc...) asparagine glycosylation sites follow: Asn-410, Asn-459, and Asn-503. Cys-472 and Cys-521 are oxidised to a cystine. Disordered stretches follow at residues 541–563 (DWGV…SQPV) and 639–662 (EPSP…EDPW). A compositionally biased stretch (pro residues) spans 546-559 (PDPPTEPSSPPGAP). Fibronectin type-III domains lie at 558–652 (APSQ…TQDS), 671–766 (VAVR…IPEE), and 771–869 (PPQG…SPPD). Asn-784, Asn-813, and Asn-820 each carry an N-linked (GlcNAc...) asparagine glycan. The chain crosses the membrane as a helical span at residues 892–912 (AFLAGSGAACGALLLGLCAAL). Topologically, residues 913–1386 (YWRRKQRKEL…PGQKRREEPR (474 aa)) are cytoplasmic. Disordered stretches follow at residues 965–989 (SWPH…NPDP), 1028–1310 (ELQT…AVPL), and 1327–1386 (SRPS…EEPR). Residues 1067–1083 (VKLLGKPVQMPSLNWPE) are compositionally biased toward low complexity. Positions 1099-1112 (GPEEELEGSSEPEE) are enriched in acidic residues. Residues 1158 to 1169 (PSPPDPPQPPTD) are compositionally biased toward pro residues. 2 stretches are compositionally biased toward low complexity: residues 1178-1191 (RRVP…LSVS) and 1202-1229 (PAGL…SAPG). Ser-1263 is modified (phosphoserine). A compositionally biased stretch (basic and acidic residues) spans 1294–1304 (LERERSGERKA). Residues 1333–1344 (SRGQGTSTCSTA) are compositionally biased toward polar residues. Positions 1345 to 1361 (GSNSSRGSSSSRGSRGP) are enriched in low complexity.

It belongs to the immunoglobulin superfamily. ROBO family. As to quaternary structure, monomer. Interacts (via Fibronectin type-III 1 domain) with NELL2 (via the EGF domains) with a 3:3 stoichiometry; this interaction promotes oligomerization of ROBO3 resulting in the repulsion of commissural axons in the midline.

Its subcellular location is the membrane. Functionally, receptor involved in axon guidance during development. Acts as a multifunctional regulator of pathfinding that simultaneously mediates NELL2 repulsion, inhibits SLIT repulsion, and facilitates Netrin-1/NTN1 attraction. In spinal cord development plays a role in guiding commissural axons probably by preventing premature sensitivity to Slit proteins thus inhibiting Slit signaling through ROBO1/ROBO2. Binding OF NELL2 to the receptor ROBO3 promotes oligomerization of ROBO3, resulting in the repulsion of commissural axons in the midline. ROBO3 also indirectly boosts axon attraction to NTN1 without interacting with NTN1 itself. This is Roundabout homolog 3 from Homo sapiens (Human).